Reading from the N-terminus, the 1022-residue chain is GPI ethanolamine phosphate transferase 1 (1022 aa).

The Cytoplasmic segment spans residues 1–6 (MARVGR). Residues 7-27 (VGFLTLAVVFHLMYAYSIFDI) form a helical membrane-spanning segment. Topologically, residues 28–466 (YFVSPIVSGM…LQTYDWLFLR (439 aa)) are lumenal. 2 N-linked (GlcNAc...) asparagine glycosylation sites follow: N148 and N433. Residues 467–487 (TIVSLGYLGWIAYALTTVIDL) form a helical membrane-spanning segment. Residues 488–498 (HVLHGKSESNR) lie on the Cytoplasmic side of the membrane. A helical transmembrane segment spans residues 499 to 519 (TTFSIMFFSSILVALFSVLLY). The Lumenal segment spans residues 520–560 (QGSSWRYYLYALFPIFFWEEVFARRKALLAGREILLGHVHS). The chain crosses the membrane as a helical span at residues 561-581 (VSGYFAFAIQLLLYVGVLEAL). The Cytoplasmic segment spans residues 582–589 (VQSYFHRD). The chain crosses the membrane as a helical span at residues 590 to 610 (IFTVCFILGGFWPITYGTKFL). Residues 611–614 (GQHK) lie on the Lumenal side of the membrane. The helical transmembrane segment at 615 to 635 (LLSASWALGCFLMSIFTLLPA) threads the bilayer. The Cytoplasmic segment spans residues 636–640 (NKVED). Residues 641–661 (MMMISCGSLLMFLTGLLYLIF) traverse the membrane as a helical segment. At 662–685 (ERSILGQKRSSDPNSVVSSCGSRT) the chain is on the lumenal side. Residues 686-706 (IMGAQVGMILLALIVTRSSVA) traverse the membrane as a helical segment. Over 707 to 713 (SLQAKQG) the chain is Cytoplasmic. A helical membrane pass occupies residues 714-734 (LPLGNQVLGWAILVSSLLLPF). The Lumenal segment spans residues 735 to 749 (LHRLYPNSHYLHRLM). Helical transmembrane passes span 750-770 (VIFL…EGLF) and 771-791 (YFVF…IYIH). At 792–837 (TTAPTREQDHSVANGSLPAKKPSPGNTVVVEGQPYRYRTLSVSDAR) the chain is on the lumenal side. The N-linked (GlcNAc...) asparagine glycan is linked to N805. A helical membrane pass occupies residues 838–858 (VALFFFFLLQSGFFSTGNIAS). At 859-880 (VSSFSLDSVYRLIPIFNPFAQG) the chain is on the cytoplasmic side. Residues 881–901 (ALLILKLLIPFAIISANLGIL) traverse the membrane as a helical segment. Residues 902-910 (NHRLEVAPS) lie on the Lumenal side of the membrane. The chain crosses the membrane as a helical span at residues 911–931 (ALFMVVMSISDVMTLNFFYMV). Residues 932–947 (RDEGSWLEIGTTISHF) are Cytoplasmic-facing. The chain crosses the membrane as a helical span at residues 948–968 (CIASFLCTFVAVLEFLSELFI). Residues 969 to 1022 (SGVDFGHPATTVGSAVAKAVNGSVACGHSPDSDISGEDSTSVGITAKADPDARS) are Lumenal-facing. N-linked (GlcNAc...) asparagine glycosylation occurs at N989. A disordered region spans residues 998 to 1022 (PDSDISGEDSTSVGITAKADPDARS).

The protein belongs to the PIGG/PIGN/PIGO family. PIGN subfamily.

Its subcellular location is the endoplasmic reticulum membrane. Its pathway is glycolipid biosynthesis; glycosylphosphatidylinositol-anchor biosynthesis. Functionally, ethanolamine phosphate transferase involved in glycosylphosphatidylinositol-anchor biosynthesis. Transfers ethanolamine phosphate to the first alpha-1,4-linked mannose of the glycosylphosphatidylinositol precursor of GPI-anchor. The protein is GPI ethanolamine phosphate transferase 1 (mcd4) of Aspergillus oryzae (strain ATCC 42149 / RIB 40) (Yellow koji mold).